A 185-amino-acid chain; its full sequence is Elongation factor P (185 aa).

The protein belongs to the elongation factor P family.

It is found in the cytoplasm. It participates in protein biosynthesis; polypeptide chain elongation. Involved in peptide bond synthesis. Stimulates efficient translation and peptide-bond synthesis on native or reconstituted 70S ribosomes in vitro. Probably functions indirectly by altering the affinity of the ribosome for aminoacyl-tRNA, thus increasing their reactivity as acceptors for peptidyl transferase. The chain is Elongation factor P from Dechloromonas aromatica (strain RCB).